The primary structure comprises 167 residues: Crossover junction endodeoxyribonuclease RuvC (167 aa).

Residues aspartate 8, glutamate 67, and aspartate 139 contribute to the active site. Mg(2+)-binding residues include aspartate 8, glutamate 67, and aspartate 139.

This sequence belongs to the RuvC family. In terms of assembly, homodimer which binds Holliday junction (HJ) DNA. The HJ becomes 2-fold symmetrical on binding to RuvC with unstacked arms; it has a different conformation from HJ DNA in complex with RuvA. In the full resolvosome a probable DNA-RuvA(4)-RuvB(12)-RuvC(2) complex forms which resolves the HJ. Requires Mg(2+) as cofactor.

It localises to the cytoplasm. The enzyme catalyses Endonucleolytic cleavage at a junction such as a reciprocal single-stranded crossover between two homologous DNA duplexes (Holliday junction).. The RuvA-RuvB-RuvC complex processes Holliday junction (HJ) DNA during genetic recombination and DNA repair. Endonuclease that resolves HJ intermediates. Cleaves cruciform DNA by making single-stranded nicks across the HJ at symmetrical positions within the homologous arms, yielding a 5'-phosphate and a 3'-hydroxyl group; requires a central core of homology in the junction. The consensus cleavage sequence is 5'-(A/T)TT(C/G)-3'. Cleavage occurs on the 3'-side of the TT dinucleotide at the point of strand exchange. HJ branch migration catalyzed by RuvA-RuvB allows RuvC to scan DNA until it finds its consensus sequence, where it cleaves and resolves the cruciform DNA. This is Crossover junction endodeoxyribonuclease RuvC from Halorhodospira halophila (strain DSM 244 / SL1) (Ectothiorhodospira halophila (strain DSM 244 / SL1)).